A 306-amino-acid polypeptide reads, in one-letter code: MNIRDLGKVAVLLGGRSAEREISLKSGHAVLAALQRSQVDAHAFDPVGQPLEDLLKQGFDRAFIALHGRYGEDGSVQGALELMDLPYTGSGILASALAMDKWRTKMIWQAAGISTPDYVMLDADSNFQEVTDRLGLPLIIKPAREGSTIGLNKVDYAQDMQSAYQTAAQHDSLVIAEQFIQGIELTAAILDDVPLPLVRIDVTEGLYDYQAKYFSESTRYTCPSGLSKILTTRIQEQALYAHRILGCTGWSRVDLILDKNGQPFFLEANTSPGMTNHSLVPMAAQAAGISFDELVIQILELSCEYA.

In terms of domain architecture, ATP-grasp spans 105-300 (KMIWQAAGIS…FDELVIQILE (196 aa)). 131-186 (TDRLGLPLIIKPAREGSTIGLNKVDYAQDMQSAYQTAAQHDSLVIAEQFIQGIELT) serves as a coordination point for ATP. Mg(2+) is bound by residues aspartate 254, glutamate 267, and asparagine 269.

It belongs to the D-alanine--D-alanine ligase family. Mg(2+) is required as a cofactor. Requires Mn(2+) as cofactor.

Its subcellular location is the cytoplasm. It carries out the reaction 2 D-alanine + ATP = D-alanyl-D-alanine + ADP + phosphate + H(+). It functions in the pathway cell wall biogenesis; peptidoglycan biosynthesis. Its function is as follows. Cell wall formation. The sequence is that of D-alanine--D-alanine ligase from Nitrosomonas eutropha (strain DSM 101675 / C91 / Nm57).